Consider the following 355-residue polypeptide: Alanine racemase (355 aa).

The active-site Proton acceptor; specific for D-alanine is the K34. K34 bears the N6-(pyridoxal phosphate)lysine mark. R133 is a substrate binding site. Y249 acts as the Proton acceptor; specific for L-alanine in catalysis. M297 serves as a coordination point for substrate.

The protein belongs to the alanine racemase family. Pyridoxal 5'-phosphate is required as a cofactor.

The catalysed reaction is L-alanine = D-alanine. It participates in amino-acid biosynthesis; D-alanine biosynthesis; D-alanine from L-alanine: step 1/1. Its function is as follows. Catalyzes the interconversion of L-alanine and D-alanine. May also act on other amino acids. In Rickettsia akari (strain Hartford), this protein is Alanine racemase (alr).